The sequence spans 508 residues: Maturase K (508 aa).

This sequence belongs to the intron maturase 2 family. MatK subfamily.

The protein resides in the plastid. Its subcellular location is the chloroplast. Usually encoded in the trnK tRNA gene intron. Probably assists in splicing its own and other chloroplast group II introns. This is Maturase K from Cunninghamia lanceolata (China fir).